Here is a 425-residue protein sequence, read N- to C-terminus: Homogentisate 1,2-dioxygenase (425 aa).

The active-site Proton acceptor is the H283. 2 residues coordinate Fe cation: H326 and E332. Homogentisate contacts are provided by Y341 and H362. Residue H362 coordinates Fe cation.

This sequence belongs to the homogentisate dioxygenase family. Hexamer; dimer of trimers. Fe cation serves as cofactor.

It carries out the reaction homogentisate + O2 = 4-maleylacetoacetate + H(+). The protein operates within amino-acid degradation; L-phenylalanine degradation; acetoacetate and fumarate from L-phenylalanine: step 4/6. In terms of biological role, involved in the catabolism of homogentisate (2,5-dihydroxyphenylacetate or 2,5-OH-PhAc), a central intermediate in the degradation of phenylalanine and tyrosine. Catalyzes the oxidative ring cleavage of the aromatic ring of homogentisate to yield maleylacetoacetate. In Caulobacter vibrioides (strain ATCC 19089 / CIP 103742 / CB 15) (Caulobacter crescentus), this protein is Homogentisate 1,2-dioxygenase.